A 245-amino-acid polypeptide reads, in one-letter code: Flavin-dependent thymidylate synthase (245 aa).

A ThyX domain is found at 5–210 (IRVKLVNYTK…ELRPIIKWAK (206 aa)). Residues S59, 83-85 (RHR), and Q91 contribute to the FAD site. DUMP contacts are provided by residues 80–83 (QLVR), 91–95 (QQSQR), and R149. Positions 83 to 93 (RHRLASYTQQS) match the ThyX motif motif. FAD-binding positions include 165–167 (NLR) and H171. Residue R176 participates in dUMP binding. Residue R176 is the Involved in ionization of N3 of dUMP, leading to its activation of the active site.

The protein belongs to the thymidylate synthase ThyX family. As to quaternary structure, homotetramer. The cofactor is FAD.

It carries out the reaction dUMP + (6R)-5,10-methylene-5,6,7,8-tetrahydrofolate + NADPH + H(+) = dTMP + (6S)-5,6,7,8-tetrahydrofolate + NADP(+). Its pathway is pyrimidine metabolism; dTTP biosynthesis. Functionally, catalyzes the reductive methylation of 2'-deoxyuridine-5'-monophosphate (dUMP) to 2'-deoxythymidine-5'-monophosphate (dTMP) while utilizing 5,10-methylenetetrahydrofolate (mTHF) as the methyl donor, and NADPH and FADH(2) as the reductant. This is Flavin-dependent thymidylate synthase from Thermococcus kodakarensis (strain ATCC BAA-918 / JCM 12380 / KOD1) (Pyrococcus kodakaraensis (strain KOD1)).